The chain runs to 459 residues: Cysteine desulfurase (459 aa).

The N-terminal 17 residues, 1–17, are a transit peptide targeting the mitochondrion; the sequence is MVGSVAGNMLLRAAWRR. Ala129, Thr130, Gln237, Ser257, and His259 together coordinate pyridoxal 5'-phosphate. N6-(pyridoxal phosphate)lysine is present on Lys260. Pyridoxal 5'-phosphate is bound at residue Thr297. Catalysis depends on Cys383, which acts as the Cysteine persulfide intermediate. A [2Fe-2S] cluster-binding site is contributed by Cys383. Cys383 serves as a coordination point for Zn(2+). Cysteine persulfide is present on Cys383.

Belongs to the class-V pyridoxal-phosphate-dependent aminotransferase family. NifS/IscS subfamily. Homodimer. Component of the mitochondrial core iron-sulfur cluster (ISC) complex composed of NFS1, LYRM4, NDUFAB1, ISCU, FXN, and FDX2; this complex is a heterohexamer containing two copies of each monomer. Component of cyteine desulfurase complex composed of NFS1, LYRM4 and NDUFAB1; this complex contributes to the activation of cysteine desulfurase activity and NFS1 stabilization. Interacts (homodimer form) with ISCU (D-state); each monomer interacts with the C-terminal regions of each NFS1 monomer. Interacts with HSPA9. Interacts (via homodimer form) with FDX2. Interacts (via homodimer form) with FXN. Interacts with LYRM4. Component of a complex composed of FXN, NFS1, LYRM4 and ISCU. The cofactor is pyridoxal 5'-phosphate. N-gluconoylated. In terms of processing, cysteine persulfide intermediate is reduced by thiol-containing molecules like glutathione and L-cysteine. Persulfide reduction is a rate-limiting step of cysteine desulfurase catalytic cycle. In terms of tissue distribution, ubiquitous.

It localises to the mitochondrion. It carries out the reaction (sulfur carrier)-H + L-cysteine = (sulfur carrier)-SH + L-alanine. The enzyme catalyses L-cysteinyl-[cysteine desulfurase] + L-cysteine = S-sulfanyl-L-cysteinyl-[cysteine desulfurase] + L-alanine. Its activity is regulated as follows. Active only in complex with LYRM4. Its function is as follows. Mitochondrial cysteine desulfurase, of the core iron-sulfur cluster (ISC) assembly complex, that catalyzes the desulfuration of L-cysteine to L-alanine, as component of the cysteine desulfurase complex, leading to the formation of a cysteine persulfide intermediate at the active site cysteine residue and participates in the [2Fe-2S] clusters assembly on the scaffolding protein ISCU. The persulfide is then transferred on the flexible Cys loop from the catalytic site of NFS1 to the surface of NFS1. After the NFS1-linked persulfide sulfur is transferred to one of the conserved Cys residues of the scaffold, a reaction assisted by FXN. The core iron-sulfur cluster (ISC) assembly complex is involved in the de novo synthesis of a [2Fe-2S] cluster, the first step of the mitochondrial iron-sulfur protein biogenesis. This process is initiated by the cysteine desulfurase complex (NFS1:LYRM4:NDUFAB1) that produces persulfide which is delivered on the scaffold protein ISCU in a FXN-dependent manner. Then this complex is stabilized by FDX2 which provides reducing equivalents to accomplish the [2Fe-2S] cluster assembly. Finally, the [2Fe-2S] cluster is transferred from ISCU to chaperone proteins, including HSCB, HSPA9 and GLRX5. This chain is Cysteine desulfurase, found in Mus musculus (Mouse).